A 134-amino-acid polypeptide reads, in one-letter code: Putative nickel-responsive regulator (134 aa).

Ni(2+) contacts are provided by H78, H89, H91, and C97.

It belongs to the transcriptional regulatory CopG/NikR family. Ni(2+) is required as a cofactor.

Transcriptional regulator. This is Putative nickel-responsive regulator from Chlorobaculum parvum (strain DSM 263 / NCIMB 8327) (Chlorobium vibrioforme subsp. thiosulfatophilum).